A 297-amino-acid chain; its full sequence is Calponin-1 (297 aa).

The Calponin-homology (CH) domain occupies His28 to Ala131. Calponin-like repeat units lie at residues Ile164–Tyr189, Ile204–Phe229, and Val243–Tyr268. Thr170 carries the phosphothreonine; by ROCK2 modification. The residue at position 175 (Ser175) is a Phosphoserine; by ROCK2. Thr180 and Thr184 each carry phosphothreonine; by ROCK2. Thr259 bears the Phosphothreonine; by ROCK2 mark.

This sequence belongs to the calponin family.

Its function is as follows. Thin filament-associated protein that is implicated in the regulation and modulation of smooth muscle contraction. It is capable of binding to actin, calmodulin and tropomyosin. The interaction of calponin with actin inhibits the actomyosin Mg-ATPase activity. The polypeptide is Calponin-1 (CNN1) (Bos taurus (Bovine)).